Here is a 77-residue protein sequence, read N- to C-terminus: UPF0291 protein EAT1b_0405 (77 aa).

The disordered stretch occupies residues 53–77; it reads KVVDPDGNDVTPEKLKEDQKRYRGE. Residues 63–77 show a composition bias toward basic and acidic residues; that stretch reads TPEKLKEDQKRYRGE.

The protein belongs to the UPF0291 family.

The protein localises to the cytoplasm. This Exiguobacterium sp. (strain ATCC BAA-1283 / AT1b) protein is UPF0291 protein EAT1b_0405.